Consider the following 307-residue polypeptide: Potassium channel subfamily K member 7 (307 aa).

Residues 1-10 (MGGLRPWSRY) lie on the Cytoplasmic side of the membrane. A helical membrane pass occupies residues 11 to 31 (GLLVVAHLLALGLGAVVFQAL). N-linked (GlcNAc...) asparagine glycosylation occurs at asparagine 83. Residues 92–119 (LPSALLFAASILTTTGYGHMAPLSPGGK) constitute an intramembrane region (pore-forming). Residues 120-140 (AFCMVYAALGLPASLALVATL) traverse the membrane as a helical segment. The Cytoplasmic portion of the chain corresponds to 141–170 (RHCLLPVLSRPRAWVAVHWQLSPARAALLQ). A helical transmembrane segment spans residues 171 to 191 (AVALGLLVASSFVLLPALVLW). The segment at residues 199–227 (LLGAVYFCFSSLSTIGLEDLLPGRGRSLH) is an intramembrane region (pore-forming). A helical membrane pass occupies residues 233–253 (LGQLALLGYLLLGLLAMLLAV). Residues 254–307 (ETFSELPQVRAMGKFFRPSGPVTAEDQGGILGQDELALSTLPPAAPASGQAPAC) lie on the Cytoplasmic side of the membrane.

Belongs to the two pore domain potassium channel (TC 1.A.1.8) family. Homodimer.

Its subcellular location is the membrane. Its function is as follows. Probable potassium channel subunit. No channel activity observed in vitro as protein remains in the endoplasmic reticulum. May need to associate with an as yet unknown partner in order to reach the plasma membrane. This chain is Potassium channel subfamily K member 7 (KCNK7), found in Homo sapiens (Human).